The sequence spans 467 residues: Dimethylamine methyltransferase MtbB1 (467 aa).

Position 356 (Pyl356) is a non-standard amino acid, pyrrolysine.

Belongs to the dimethylamine methyltransferase family.

It carries out the reaction Co(I)-[dimethylamine-specific corrinoid protein] + dimethylamine + H(+) = methyl-Co(III)-[dimethylamine-specific corrinoid protein] + methylamine. It participates in one-carbon metabolism; methanogenesis from dimethylamine. Catalyzes the transfer of a methyl group from dimethylamine to the corrinoid cofactor of MtbC. This Methanosarcina barkeri (strain Fusaro / DSM 804) protein is Dimethylamine methyltransferase MtbB1 (mtbB1).